The following is a 1575-amino-acid chain: Lysophospholipase NTE1 (1575 aa).

The disordered stretch occupies residues 1–56 (MNLTTTMPAAVAPDPPAQLAVSSRSLSDSSDAAGASRTSSSCRASSPSHCPTHAWN). The Cytoplasmic portion of the chain corresponds to 1-99 (MNLTTTMPAA…TLSPPNLLQG (99 aa)). The span at 19–48 (LAVSSRSLSDSSDAAGASRTSSSCRASSPS) shows a compositional bias: low complexity. The chain crosses the membrane as a helical span at residues 100-120 (IVSQLAMASYIGRLLLYLFQV). Residues 121-151 (VPSLLYWAITFTTITVPTALFTLFSMSLTFT) lie on the Lumenal side of the membrane. The chain crosses the membrane as a helical span at residues 152-172 (MNFTTLLIIVLLLVSTVSWFI). Residues 173–1575 (RYRFLNIYSR…RTMAPRRASI (1403 aa)) lie on the Cytoplasmic side of the membrane. Disordered stretches follow at residues 339–425 (DMES…AKSV) and 568–587 (GSAS…VSPG). Positions 409–424 (RGHRRKRPSRPKRAKS) are enriched in basic residues. Residues 737 to 856 (GGTS…TSYR) and 894 to 1014 (RLTT…IAQR) contribute to the a nucleoside 3',5'-cyclic phosphate site. The region spanning 1272 to 1436 (LVLGGGGARG…VDNLTVARMK (165 aa)) is the PNPLA domain. A GXGXXG motif is present at residues 1276 to 1281 (GGGARG). The short motif at 1303–1307 (GTSIG) is the GXSXG element. S1305 (nucleophile) is an active-site residue. Residue D1423 is the Proton acceptor of the active site. A DGA/G motif is present at residues 1423–1425 (DGG).

The protein belongs to the NTE family.

It is found in the endoplasmic reticulum membrane. It carries out the reaction a 1-acyl-sn-glycero-3-phosphocholine + H2O = sn-glycerol 3-phosphocholine + a fatty acid + H(+). Its activity is regulated as follows. Inhibited by organophosphorus esters. In terms of biological role, intracellular phospholipase B that catalyzes the double deacylation of phosphatidylcholine (PC) to glycerophosphocholine (GroPCho). Plays an important role in membrane lipid homeostasis. Responsible for the rapid PC turnover in response to inositol, elevated temperatures, or when choline is present in the growth medium. The polypeptide is Lysophospholipase NTE1 (NTE1) (Coccidioides immitis (strain RS) (Valley fever fungus)).